The sequence spans 1202 residues: DNA-directed RNA polymerase subunit beta (1202 aa).

The protein belongs to the RNA polymerase beta chain family. As to quaternary structure, the RNAP catalytic core consists of 2 alpha, 1 beta, 1 beta' and 1 omega subunit. When a sigma factor is associated with the core the holoenzyme is formed, which can initiate transcription.

It carries out the reaction RNA(n) + a ribonucleoside 5'-triphosphate = RNA(n+1) + diphosphate. Functionally, DNA-dependent RNA polymerase catalyzes the transcription of DNA into RNA using the four ribonucleoside triphosphates as substrates. The chain is DNA-directed RNA polymerase subunit beta from Mycoplasmopsis synoviae (strain 53) (Mycoplasma synoviae).